The following is a 131-amino-acid chain: UPF0102 protein YraN (131 aa).

Polar residues predominate over residues 1–19 (MATVPTRSGSPRQLTTKQT). Residues 1 to 20 (MATVPTRSGSPRQLTTKQTG) are disordered.

Belongs to the UPF0102 family.

In Escherichia coli O17:K52:H18 (strain UMN026 / ExPEC), this protein is UPF0102 protein YraN.